The chain runs to 116 residues: Large ribosomal subunit protein bL21c (116 aa).

This sequence belongs to the bacterial ribosomal protein bL21 family. In terms of assembly, part of the 50S ribosomal subunit.

The protein resides in the plastid. The protein localises to the chloroplast. Its function is as follows. This protein binds to 23S rRNA. In Emiliania huxleyi (Coccolithophore), this protein is Large ribosomal subunit protein bL21c.